We begin with the raw amino-acid sequence, 361 residues long: MNLVEVATTKPYRVRIGSGAVHELAGLVAGRRAAVVCPQTLVHLVPRFGIDDLVVIEVPDAEAAKTPEVLVNGWRRLAEANMTRGDIIVGFGGGATTDVAGFLAATWMRGIDVIHVPTTVLAMADAAIGGKTGVNIPAGKNLVGAFHEPIGVLCDTELLTTLPAREVRSGLAEIVKCGFIKDPVILDVISNHPRLALDVTSQTFVEVLTRAITVKAGVVSADLHERTSSREEVGRERLNYGHTLAHAIEAHKHFTWRHGEADAVGMVFAAELSHRYLGLSDEVVARTRTILSEIGLPVTCDEIKWADLRKTMNVDKKTRVDPQTGRQVLRFVGIHKPGQVAMIVDPDEAALAECYDRCSAR.

Residues 60-65, 94-98, 118-119, lysine 131, and lysine 140 contribute to the NAD(+) site; these read DAEAAK, GATTD, and TT. Zn(2+)-binding residues include glutamate 173, histidine 242, and histidine 258.

It belongs to the sugar phosphate cyclases superfamily. Dehydroquinate synthase family. The cofactor is Co(2+). Zn(2+) is required as a cofactor. Requires NAD(+) as cofactor.

Its subcellular location is the cytoplasm. The enzyme catalyses 7-phospho-2-dehydro-3-deoxy-D-arabino-heptonate = 3-dehydroquinate + phosphate. It participates in metabolic intermediate biosynthesis; chorismate biosynthesis; chorismate from D-erythrose 4-phosphate and phosphoenolpyruvate: step 2/7. Its function is as follows. Catalyzes the conversion of 3-deoxy-D-arabino-heptulosonate 7-phosphate (DAHP) to dehydroquinate (DHQ). The sequence is that of 3-dehydroquinate synthase from Cutibacterium acnes (strain DSM 16379 / KPA171202) (Propionibacterium acnes).